The chain runs to 305 residues: Acetaldehyde dehydrogenase (305 aa).

S13–I16 lines the NAD(+) pocket. The Acyl-thioester intermediate role is filled by C128. NAD(+) contacts are provided by residues S159 to N167 and N278.

This sequence belongs to the acetaldehyde dehydrogenase family.

The catalysed reaction is acetaldehyde + NAD(+) + CoA = acetyl-CoA + NADH + H(+). The polypeptide is Acetaldehyde dehydrogenase (Roseiflexus sp. (strain RS-1)).